A 50-amino-acid polypeptide reads, in one-letter code: Bacterioferritin (50 aa).

In terms of domain architecture, Ferritin-like diiron spans 1 to 50 (MKGDPKVIDYLNKALRHELTAINQYWLHYRLLDNWGIKDLAKKWRAESIE). Glu18 lines the Fe cation pocket.

Belongs to the bacterioferritin family. As to quaternary structure, homooligomer of 24 subunits, arranged as 12 dimers, that are packed together to form an approximately spherical molecule with a central cavity, in which large amounts of iron can be deposited. Requires heme b as cofactor.

The catalysed reaction is 4 Fe(2+) + O2 + 4 H(+) = 4 Fe(3+) + 2 H2O. It catalyses the reaction Fe(2+)(in) = Fe(2+)(out). Iron-storage protein, whose ferroxidase center binds Fe(2+), oxidizes it using dioxygen to Fe(3+), and participates in the subsequent Fe(3+) oxide mineral core formation within the central cavity of the BFR protein shell. Its function is as follows. May act as one of the electron carriers in the reverse electron-transport system from cytochrome c-552 to NADP(+). The chain is Bacterioferritin (bfr) from Nitrobacter winogradskyi (Nitrobacter agilis).